We begin with the raw amino-acid sequence, 595 residues long: Beta-(1--&gt;2)glucan export ATP-binding/permease protein NdvA (595 aa).

The region spanning 21-301 (SLLICAANVM…MSNFINLTVS (281 aa)) is the ABC transmembrane type-1 domain. The next 5 membrane-spanning stretches (helical) occupy residues 22 to 42 (LLIC…PILF), 55 to 75 (IILT…AYVL), 128 to 148 (AIWL…FILI), 152 to 172 (FNMN…YVLI), and 248 to 268 (TAST…VAKG). An ABC transporter domain is found at 335 to 569 (VQFHHVTYKF…GGRFYKLLKA (235 aa)). Residue 368 to 375 (GPTGAGKT) coordinates ATP.

Belongs to the ABC transporter superfamily. Beta-(1--&gt;2)glucan exporter (TC 3.A.1.108.1) family. As to quaternary structure, homodimer.

The protein localises to the cell inner membrane. It carries out the reaction [(1-&gt;2)-beta-D-glucosyl](n)(in) + ATP + H2O = [(1-&gt;2)-beta-D-glucosyl](n)(out) + ADP + phosphate + H(+). Functionally, involved in beta-(1--&gt;2)glucan export. Transmembrane domains (TMD) form a pore in the inner membrane and the ATP-binding domain (NBD) is responsible for energy generation. The sequence is that of Beta-(1--&gt;2)glucan export ATP-binding/permease protein NdvA from Bartonella quintana (strain Toulouse) (Rochalimaea quintana).